The primary structure comprises 513 residues: ATP synthase subunit alpha (513 aa).

Residue 169–176 participates in ATP binding; it reads GDRQTGKT.

Belongs to the ATPase alpha/beta chains family. As to quaternary structure, F-type ATPases have 2 components, CF(1) - the catalytic core - and CF(0) - the membrane proton channel. CF(1) has five subunits: alpha(3), beta(3), gamma(1), delta(1), epsilon(1). CF(0) has three main subunits: a(1), b(2) and c(9-12). The alpha and beta chains form an alternating ring which encloses part of the gamma chain. CF(1) is attached to CF(0) by a central stalk formed by the gamma and epsilon chains, while a peripheral stalk is formed by the delta and b chains.

Its subcellular location is the cell inner membrane. The enzyme catalyses ATP + H2O + 4 H(+)(in) = ADP + phosphate + 5 H(+)(out). In terms of biological role, produces ATP from ADP in the presence of a proton gradient across the membrane. The alpha chain is a regulatory subunit. In Klebsiella pneumoniae (strain 342), this protein is ATP synthase subunit alpha.